The following is a 292-amino-acid chain: Endolysin A (292 aa).

This sequence belongs to the L5likevirus endolysin A protein family.

Its function is as follows. Endolysin that degrades host peptidoglycans and participates with the holin protein in the sequential events which lead to the programmed host cell lysis releasing the mature viral particles. Once the holin has permeabilized the host cell membrane, the endolysin can reach the periplasm and break down the peptidoglycan layer. In Mycobacterium phage L5 (Mycobacteriophage L5), this protein is Endolysin A (10).